The sequence spans 247 residues: uncharacterized protein (247 aa).

The stretch at 200–225 (SGKYSELKTKVNDIENDLRTLSSNTN) forms a coiled coil.

This is an uncharacterized protein from Acanthamoeba polyphaga (Amoeba).